Here is a 265-residue protein sequence, read N- to C-terminus: Thiazole synthase (265 aa).

Lysine 103 serves as the catalytic Schiff-base intermediate with DXP. 1-deoxy-D-xylulose 5-phosphate contacts are provided by residues glycine 164, 190–191, and 212–213; these read AG and NT.

It belongs to the ThiG family. As to quaternary structure, homotetramer. Forms heterodimers with either ThiH or ThiS.

It localises to the cytoplasm. The enzyme catalyses [ThiS sulfur-carrier protein]-C-terminal-Gly-aminoethanethioate + 2-iminoacetate + 1-deoxy-D-xylulose 5-phosphate = [ThiS sulfur-carrier protein]-C-terminal Gly-Gly + 2-[(2R,5Z)-2-carboxy-4-methylthiazol-5(2H)-ylidene]ethyl phosphate + 2 H2O + H(+). It functions in the pathway cofactor biosynthesis; thiamine diphosphate biosynthesis. In terms of biological role, catalyzes the rearrangement of 1-deoxy-D-xylulose 5-phosphate (DXP) to produce the thiazole phosphate moiety of thiamine. Sulfur is provided by the thiocarboxylate moiety of the carrier protein ThiS. In vitro, sulfur can be provided by H(2)S. This chain is Thiazole synthase, found in Bordetella pertussis (strain Tohama I / ATCC BAA-589 / NCTC 13251).